Here is a 255-residue protein sequence, read N- to C-terminus: 5-oxoprolinase subunit A (255 aa).

Belongs to the LamB/PxpA family. Forms a complex composed of PxpA, PxpB and PxpC.

The enzyme catalyses 5-oxo-L-proline + ATP + 2 H2O = L-glutamate + ADP + phosphate + H(+). Functionally, catalyzes the cleavage of 5-oxoproline to form L-glutamate coupled to the hydrolysis of ATP to ADP and inorganic phosphate. This Thermococcus sibiricus (strain DSM 12597 / MM 739) protein is 5-oxoprolinase subunit A.